The following is a 265-amino-acid chain: Cytochrome c oxidase subunit 3 (265 aa).

Transmembrane regions (helical) follow at residues 16–36 (PWPISGSLGALATTVGGVMYM), 41–61 (GGATLLSLGLIFILYTMFVWW), 81–101 (GPRYGSISFIVSEVMFLFAFF), 137–157 (TPILLSSGAAVTWAHHAILAG), 162–182 (AVYALVATVSLALVFTGFQGM), 200–220 (FFLATGFHGFHVIIGTLFLII), and 245–265 (WHFVDVVRLFPFVSIYWWGGI).

It belongs to the cytochrome c oxidase subunit 3 family. Component of the cytochrome c oxidase (complex IV, CIV), a multisubunit enzyme composed of a catalytic core of 3 subunits and several supernumerary subunits. The complex exists as a monomer or a dimer and forms supercomplexes (SCs) in the inner mitochondrial membrane with ubiquinol-cytochrome c oxidoreductase (cytochrome b-c1 complex, complex III, CIII).

It localises to the mitochondrion inner membrane. The enzyme catalyses 4 Fe(II)-[cytochrome c] + O2 + 8 H(+)(in) = 4 Fe(III)-[cytochrome c] + 2 H2O + 4 H(+)(out). Its function is as follows. Component of the cytochrome c oxidase, the last enzyme in the mitochondrial electron transport chain which drives oxidative phosphorylation. The respiratory chain contains 3 multisubunit complexes succinate dehydrogenase (complex II, CII), ubiquinol-cytochrome c oxidoreductase (cytochrome b-c1 complex, complex III, CIII) and cytochrome c oxidase (complex IV, CIV), that cooperate to transfer electrons derived from NADH and succinate to molecular oxygen, creating an electrochemical gradient over the inner membrane that drives transmembrane transport and the ATP synthase. Cytochrome c oxidase is the component of the respiratory chain that catalyzes the reduction of oxygen to water. Electrons originating from reduced cytochrome c in the intermembrane space (IMS) are transferred via the dinuclear copper A center (CU(A)) of subunit 2 and heme A of subunit 1 to the active site in subunit 1, a binuclear center (BNC) formed by heme A3 and copper B (CU(B)). The BNC reduces molecular oxygen to 2 water molecules using 4 electrons from cytochrome c in the IMS and 4 protons from the mitochondrial matrix. In Vicia faba (Broad bean), this protein is Cytochrome c oxidase subunit 3 (COX3).